We begin with the raw amino-acid sequence, 138 residues long: MATILVDVVSAEASIFSGQAKFVALPGESGELGILPGHTPLITRIQPGAVRIEKEDGGEEFVFVAGGILEVQPQHVTVLADTAIRGTDLDEAKASEAKRAAEEMLQNQSSDLDLARAQSELAVAAAQLAAIARLRRKK.

The protein belongs to the ATPase epsilon chain family. F-type ATPases have 2 components, CF(1) - the catalytic core - and CF(0) - the membrane proton channel. CF(1) has five subunits: alpha(3), beta(3), gamma(1), delta(1), epsilon(1). CF(0) has three main subunits: a, b and c.

It localises to the cell inner membrane. In terms of biological role, produces ATP from ADP in the presence of a proton gradient across the membrane. The chain is ATP synthase epsilon chain from Cupriavidus metallidurans (strain ATCC 43123 / DSM 2839 / NBRC 102507 / CH34) (Ralstonia metallidurans).